A 342-amino-acid chain; its full sequence is Phosphoribosylformylglycinamidine cyclo-ligase (342 aa).

This sequence belongs to the AIR synthase family.

The protein resides in the cytoplasm. It carries out the reaction 2-formamido-N(1)-(5-O-phospho-beta-D-ribosyl)acetamidine + ATP = 5-amino-1-(5-phospho-beta-D-ribosyl)imidazole + ADP + phosphate + H(+). It participates in purine metabolism; IMP biosynthesis via de novo pathway; 5-amino-1-(5-phospho-D-ribosyl)imidazole from N(2)-formyl-N(1)-(5-phospho-D-ribosyl)glycinamide: step 2/2. The chain is Phosphoribosylformylglycinamidine cyclo-ligase from Staphylococcus aureus (strain MSSA476).